Reading from the N-terminus, the 109-residue chain is Cell division protein ZapA (109 aa).

Residues 21–97 (PEQRDALSQA…QTIEQALLDQ (77 aa)) are a coiled coil.

This sequence belongs to the ZapA family. Type 1 subfamily. As to quaternary structure, homodimer. Interacts with FtsZ.

Its subcellular location is the cytoplasm. Activator of cell division through the inhibition of FtsZ GTPase activity, therefore promoting FtsZ assembly into bundles of protofilaments necessary for the formation of the division Z ring. It is recruited early at mid-cell but it is not essential for cell division. This Enterobacter sp. (strain 638) protein is Cell division protein ZapA.